Consider the following 219-residue polypeptide: MVGASTLAHDVRLQALRLYLVTDQFCAGGRTLADVVAAAVQGGVTCVQLREKQLNTRDFLAQALALKDLLAPHGIPLVINDRIDVALACGAQGVHLGQSDMPVTQARRLLPPEVFIGWSVETLEDVARSAELPVDYLGVSPIFATPTKTDTLPPWGLEGLRQVRRATTVPLVAIGGIHVGNAREVLLAGADGLAVVSALCAAQDPCVAALRLRQLIDAV.

Residues 48 to 52 and N80 contribute to the 4-amino-2-methyl-5-(diphosphooxymethyl)pyrimidine site; that span reads QLREK. Mg(2+) contacts are provided by D81 and D100. Position 119 (S119) interacts with 4-amino-2-methyl-5-(diphosphooxymethyl)pyrimidine. 145-147 serves as a coordination point for 2-[(2R,5Z)-2-carboxy-4-methylthiazol-5(2H)-ylidene]ethyl phosphate; it reads TPT. K148 contacts 4-amino-2-methyl-5-(diphosphooxymethyl)pyrimidine. 2-[(2R,5Z)-2-carboxy-4-methylthiazol-5(2H)-ylidene]ethyl phosphate is bound by residues G176 and 196–197; that span reads VS.

The protein belongs to the thiamine-phosphate synthase family. Requires Mg(2+) as cofactor.

The enzyme catalyses 2-[(2R,5Z)-2-carboxy-4-methylthiazol-5(2H)-ylidene]ethyl phosphate + 4-amino-2-methyl-5-(diphosphooxymethyl)pyrimidine + 2 H(+) = thiamine phosphate + CO2 + diphosphate. It catalyses the reaction 2-(2-carboxy-4-methylthiazol-5-yl)ethyl phosphate + 4-amino-2-methyl-5-(diphosphooxymethyl)pyrimidine + 2 H(+) = thiamine phosphate + CO2 + diphosphate. It carries out the reaction 4-methyl-5-(2-phosphooxyethyl)-thiazole + 4-amino-2-methyl-5-(diphosphooxymethyl)pyrimidine + H(+) = thiamine phosphate + diphosphate. It participates in cofactor biosynthesis; thiamine diphosphate biosynthesis; thiamine phosphate from 4-amino-2-methyl-5-diphosphomethylpyrimidine and 4-methyl-5-(2-phosphoethyl)-thiazole: step 1/1. Functionally, condenses 4-methyl-5-(beta-hydroxyethyl)thiazole monophosphate (THZ-P) and 2-methyl-4-amino-5-hydroxymethyl pyrimidine pyrophosphate (HMP-PP) to form thiamine monophosphate (TMP). The protein is Thiamine-phosphate synthase of Albidiferax ferrireducens (strain ATCC BAA-621 / DSM 15236 / T118) (Rhodoferax ferrireducens).